A 280-amino-acid chain; its full sequence is Phosphatidylserine decarboxylase proenzyme (280 aa).

Active-site charge relay system; for autoendoproteolytic cleavage activity residues include Asp88, His144, and Ser247. Ser247 (schiff-base intermediate with substrate; via pyruvic acid; for decarboxylase activity) is an active-site residue. The residue at position 247 (Ser247) is a Pyruvic acid (Ser); by autocatalysis.

The protein belongs to the phosphatidylserine decarboxylase family. PSD-B subfamily. Prokaryotic type I sub-subfamily. In terms of assembly, heterodimer of a large membrane-associated beta subunit and a small pyruvoyl-containing alpha subunit. Pyruvate serves as cofactor. Post-translationally, is synthesized initially as an inactive proenzyme. Formation of the active enzyme involves a self-maturation process in which the active site pyruvoyl group is generated from an internal serine residue via an autocatalytic post-translational modification. Two non-identical subunits are generated from the proenzyme in this reaction, and the pyruvate is formed at the N-terminus of the alpha chain, which is derived from the carboxyl end of the proenzyme. The autoendoproteolytic cleavage occurs by a canonical serine protease mechanism, in which the side chain hydroxyl group of the serine supplies its oxygen atom to form the C-terminus of the beta chain, while the remainder of the serine residue undergoes an oxidative deamination to produce ammonia and the pyruvoyl prosthetic group on the alpha chain. During this reaction, the Ser that is part of the protease active site of the proenzyme becomes the pyruvoyl prosthetic group, which constitutes an essential element of the active site of the mature decarboxylase.

It localises to the cell membrane. It catalyses the reaction a 1,2-diacyl-sn-glycero-3-phospho-L-serine + H(+) = a 1,2-diacyl-sn-glycero-3-phosphoethanolamine + CO2. It participates in phospholipid metabolism; phosphatidylethanolamine biosynthesis; phosphatidylethanolamine from CDP-diacylglycerol: step 2/2. Catalyzes the formation of phosphatidylethanolamine (PtdEtn) from phosphatidylserine (PtdSer). In Xanthomonas axonopodis pv. citri (strain 306), this protein is Phosphatidylserine decarboxylase proenzyme.